The following is a 1269-amino-acid chain: Protein flightless-1 homolog (1269 aa).

Methionine 1 carries the post-translational modification N-acetylmethionine. Residues methionine 1–lysine 427 are interaction with LRRFIP1 and LRRFIP2. LRR repeat units lie at residues leucine 7–methionine 32, threonine 33–leucine 55, glutamine 56–leucine 78, serine 80–leucine 103, aspartate 104–alanine 126, lysine 127–asparagine 149, leucine 150–leucine 173, histidine 175–alanine 196, methionine 197–leucine 222, serine 223–leucine 245, serine 247–tryptophan 268, valine 269–leucine 291, lysine 293–leucine 316, asparagine 318–cysteine 339, proline 340–threonine 363, and isoleucine 365–arginine 385. Lysine 21 carries the N6-acetyllysine modification. Serine 406 is modified (phosphoserine). Phosphoserine; by SGK3 is present on serine 436. Residues valine 452–valine 473 form a disordered region. Basic and acidic residues predominate over residues alanine 453 to aspartate 465. The interval valine 495–glutamate 827 is interaction with ACTL6A. 3 Gelsolin-like repeats span residues phenylalanine 509–leucine 591, asparagine 629–tryptophan 703, and glutamate 758–phenylalanine 831. Threonine 818 is modified (phosphothreonine; by SGK3). A phosphoserine mark is found at serine 856 and serine 860. Residues lysine 951–glutamine 975 are disordered. Residues lysine 952–glutamate 965 show a composition bias toward basic and acidic residues. A compositionally biased stretch (acidic residues) spans glutamate 966–glutamine 975. 2 Gelsolin-like repeats span residues threonine 1075 to phenylalanine 1143 and lysine 1181 to phenylalanine 1254.

Interacts with actin, ACTL6A, NCOA2 and CARM1. Interacts with LRRFIP1, LRRFIP2 and MYD88. Upon LPS stimulation, LRRFIP2 competes for MYD88-binding. LRRFIP1 constitutively blocks the interaction with MyD88, even in the absence of LPS. Interacts with the nuclear receptors ESR1 and THRB. Interacts with SGK3. Interacts (via the gelsolin-like region) with TMOD1. Interacts with (via the gelsolin-like region) TMOD3. Interacts with LMOD2, VCL, GSN and DES. Strongest expression in skeletal muscle with high expression also in the heart and lung.

It is found in the nucleus. It localises to the cytoplasm. The protein resides in the cytoskeleton. The protein localises to the microtubule organizing center. Its subcellular location is the centrosome. It is found in the cell projection. It localises to the podosome. The protein resides in the cell junction. The protein localises to the focal adhesion. In terms of biological role, is a regulator of actin polymerization, required for proper myofibril organization and regulation of the length of sarcomeric thin filaments. It also plays a role in the assembly of cardiomyocyte cell adhesion complexes. Regulates cytoskeletal rearrangements involved in cytokinesis and cell migration, by inhibiting Rac1-dependent paxillin phosphorylation. May play a role as coactivator in transcriptional activation by hormone-activated nuclear receptors (NR) and acts in cooperation with NCOA2 and CARM1. Involved in estrogen hormone signaling. The protein is Protein flightless-1 homolog (FLII) of Homo sapiens (Human).